The sequence spans 518 residues: GMP synthase [glutamine-hydrolyzing] (518 aa).

One can recognise a Glutamine amidotransferase type-1 domain in the interval 6–200 (RLLIIDFGSQ…FVKLAGFKGD (195 aa)). Residue Cys-84 is the Nucleophile of the active site. Catalysis depends on residues His-175 and Glu-177. The region spanning 201–393 (WTMGAYREEA…LGLPDSFIGR (193 aa)) is the GMPS ATP-PPase domain. 228–234 (SGGVDSS) lines the ATP pocket.

In terms of assembly, homodimer.

The catalysed reaction is XMP + L-glutamine + ATP + H2O = GMP + L-glutamate + AMP + diphosphate + 2 H(+). The protein operates within purine metabolism; GMP biosynthesis; GMP from XMP (L-Gln route): step 1/1. Its function is as follows. Catalyzes the synthesis of GMP from XMP. The polypeptide is GMP synthase [glutamine-hydrolyzing] (Cereibacter sphaeroides (strain ATCC 17025 / ATH 2.4.3) (Rhodobacter sphaeroides)).